Consider the following 48-residue polypeptide: uncharacterized protein (48 aa).

It localises to the mitochondrion. This is an uncharacterized protein from Emericella nidulans (Aspergillus nidulans).